The primary structure comprises 157 residues: S-ribosylhomocysteine lyase (157 aa).

3 residues coordinate Fe cation: His54, His58, and Cys124.

This sequence belongs to the LuxS family. Homodimer. The cofactor is Fe cation.

It catalyses the reaction S-(5-deoxy-D-ribos-5-yl)-L-homocysteine = (S)-4,5-dihydroxypentane-2,3-dione + L-homocysteine. Functionally, involved in the synthesis of autoinducer 2 (AI-2) which is secreted by bacteria and is used to communicate both the cell density and the metabolic potential of the environment. The regulation of gene expression in response to changes in cell density is called quorum sensing. Catalyzes the transformation of S-ribosylhomocysteine (RHC) to homocysteine (HC) and 4,5-dihydroxy-2,3-pentadione (DPD). The sequence is that of S-ribosylhomocysteine lyase from Lactobacillus helveticus (strain DPC 4571).